Reading from the N-terminus, the 198-residue chain is Ras-related protein RabH (198 aa).

A GTP-binding site is contributed by 14–21 (GDWNVGKS). The Effector region signature appears at 36–44 (TKLSMGEHF). Residues 62-66 (DTSGM) and 120-123 (SKFD) contribute to the GTP site. Position 195 is a cysteine methyl ester (Cys-195). A lipid anchor (S-geranylgeranyl cysteine) is attached at Cys-195. Residues 196–198 (SIN) constitute a propeptide, removed in mature form.

The protein belongs to the small GTPase superfamily. Rab family.

It is found in the cell membrane. In Dictyostelium discoideum (Social amoeba), this protein is Ras-related protein RabH (rabH).